Here is a 461-residue protein sequence, read N- to C-terminus: Tol-Pal system protein TolB 2 (461 aa).

Residues 1–20 form the signal peptide; it reads MKIRHLLLLAGLVSAPAIVA. Positions 28–47 are disordered; sequence SSSAAQASGDDDGGLTGSVS.

It belongs to the TolB family. The Tol-Pal system is composed of five core proteins: the inner membrane proteins TolA, TolQ and TolR, the periplasmic protein TolB and the outer membrane protein Pal. They form a network linking the inner and outer membranes and the peptidoglycan layer.

The protein resides in the periplasm. Part of the Tol-Pal system, which plays a role in outer membrane invagination during cell division and is important for maintaining outer membrane integrity. The chain is Tol-Pal system protein TolB 2 from Novosphingobium aromaticivorans (strain ATCC 700278 / DSM 12444 / CCUG 56034 / CIP 105152 / NBRC 16084 / F199).